The chain runs to 247 residues: MNIIPCSIKTLKGLYDISGVEVGQHFYWQIGGFQIHAQVLITSWVVITILLGSVLIAVRNPQTIPTDGQNFFEYILEFIRDLSKTQIGEEYGPWVPFIGTMFLFIFVSNWSGALLPWKIIELPHGELAAPTNDINTTVALALLTSAAYFYAGLSKKGLSYFEKYIKPTPILLPINILEDFTKPLSLSFRLFGNILADELVVVVLVSLVPLVVPIPVMFLGLFTSGIQALIFATLAAAYIGESMEGHH.

A run of 5 helical transmembrane segments spans residues glutamine 38 to valine 58, valine 95 to leucine 115, isoleucine 134 to serine 154, leucine 199 to leucine 219, and glycine 220 to glycine 240.

Belongs to the ATPase A chain family. F-type ATPases have 2 components, CF(1) - the catalytic core - and CF(0) - the membrane proton channel. CF(1) has five subunits: alpha(3), beta(3), gamma(1), delta(1), epsilon(1). CF(0) has four main subunits: a, b, b' and c.

It is found in the plastid. The protein resides in the chloroplast thylakoid membrane. Its function is as follows. Key component of the proton channel; it plays a direct role in the translocation of protons across the membrane. This chain is ATP synthase subunit a, chloroplastic, found in Brachypodium distachyon (Purple false brome).